The chain runs to 300 residues: B1 kinase (300 aa).

The Protein kinase domain occupies 16 to 282; that stretch reads WVVGPLIGKG…ITMVNSLTYF (267 aa). ATP is bound by residues 22-30 and lysine 45; that span reads IGKGGFGSI. Catalysis depends on aspartate 147, which acts as the Proton acceptor.

This sequence belongs to the protein kinase superfamily. Ser/Thr protein kinase family. Poxviruses subfamily. As to quaternary structure, interacts with host JIP1; this interaction increases the amount of MAPK bound to JIP1 and subsequently increases the activity of transcription factors, such as JUN, that respond to these complexes. Interacts with protein OPG198; this interaction inhibits the repressive activity of OPG198 pseudokinase on viral replication factory formation. Mg(2+) serves as cofactor. Autophosphorylated.

It is found in the virion. The protein localises to the host cytoplasm. The catalysed reaction is L-seryl-[protein] + ATP = O-phospho-L-seryl-[protein] + ADP + H(+). It carries out the reaction L-threonyl-[protein] + ATP = O-phospho-L-threonyl-[protein] + ADP + H(+). Its function is as follows. Essential serine/threonine-protein kinase that plays different role in the viral life cycle. Phosphorylates the host small ribosomal protein RACK1 thereby customizing the ribosomes to a state optimal for viral mRNAs (which contain poly-A leaders) but not for host mRNAs. Facilitates viral DNA replication by inhibiting host BANF1, a cellular host defense responsive to foreign DNA. Phosphorylates host BANF1 on serine and threonine residues; this leads to BANF1 relocalization to the cytoplasm, loss of dimerization and impaired DNA binding activity. Indeed, BANF1 activity depends on its DNA-binding property which is blocked by VPK1-mediated phosphorylation. Required for viral intermediate genes expression, probably by inhibiting host BANF1. Modulates cellular responses via host JUN by two different mechanisms, either by direct phosphorylation or by modulation of upstream JIP1-MAPK complexes. Seems to participate in the accumulation/processing of late proteins and thus in virion maturation. In addition, inhibits B12 repressive activity on viral DNA replication via a phosphorylation-dependent mechanism. The chain is B1 kinase (OPG187) from Homo sapiens (Human).